A 369-amino-acid polypeptide reads, in one-letter code: MTTHAAAPSTRVLIVDDSAAARAMFKVIVESDPALQVMAAVPDAFAAARAMRTELPDVILLDLELPSMDGLTFLRKIMQQHPIPVVVCSSHVGAGTEAMVSALELGAREVISKPAARNDLERQEASIRICDAIRAATETTRRRSQPEPRPLAPGPKLTADEILPARPPRPVPETMPVVCIGASTGGTEALRDVLTALPASAPPIVIVQHMPRGFTAAFARRLDSLCAIEVLEAEDEMQVMPGRAIIAQGDRHLLLRRRNQGYRVSVLDGAYVCRHRPSVDVLFRSAAQEAGGNALGVIMTGMGDDGARCMAEMRAAGAETIAQNEESCVVYGMPREAVAHGGVGKVEPLDRLAARIMEFGRRHTERTVR.

Residues 11–128 form the Response regulatory domain; sequence RVLIVDDSAA…DLERQEASIR (118 aa). Asp62 is subject to 4-aspartylphosphate. The disordered stretch occupies residues 136 to 168; that stretch reads ATETTRRRSQPEPRPLAPGPKLTADEILPARPP. One can recognise a CheB-type methylesterase domain in the interval 170 to 358; sequence PVPETMPVVC…LDRLAARIME (189 aa). Residues Ser183, His209, and Asp305 contribute to the active site.

It belongs to the CheB family. In terms of processing, phosphorylated in vitro by CheA2, but not by CheA1. Phosphorylation of the N-terminal regulatory domain activates the methylesterase activity.

The protein localises to the cytoplasm. The catalysed reaction is [protein]-L-glutamate 5-O-methyl ester + H2O = L-glutamyl-[protein] + methanol + H(+). The enzyme catalyses L-glutaminyl-[protein] + H2O = L-glutamyl-[protein] + NH4(+). Its function is as follows. Involved in chemotaxis. Part of a chemotaxis signal transduction system that modulates chemotaxis in response to various stimuli. Catalyzes the demethylation of specific methylglutamate residues introduced into the chemoreceptors (methyl-accepting chemotaxis proteins or MCP) by CheR. Also mediates the irreversible deamidation of specific glutamine residues to glutamic acid. In Cereibacter sphaeroides (Rhodobacter sphaeroides), this protein is Protein-glutamate methylesterase/protein-glutamine glutaminase of group 3 operon (cheB3).